Consider the following 142-residue polypeptide: Acidic phospholipase A2 PA4 (142 aa).

Trp10, Gly12, and Gly14 together coordinate Ca(2+). 3 disulfide bridges follow: Cys11/Cys33, Cys32/Cys72, and Cys39/Cys65. Residue His36 is part of the active site. Asp37 is a binding site for Ca(2+).

Belongs to the phospholipase A2 family. Group III subfamily. Ca(2+) serves as cofactor. As to expression, expressed by the venom gland.

The protein resides in the secreted. The enzyme catalyses a 1,2-diacyl-sn-glycero-3-phosphocholine + H2O = a 1-acyl-sn-glycero-3-phosphocholine + a fatty acid + H(+). Its function is as follows. PLA2 catalyzes the calcium-dependent hydrolysis of the 2-acyl groups in 3-sn-phosphoglycerides. This chain is Acidic phospholipase A2 PA4, found in Heloderma suspectum (Gila monster).